Consider the following 258-residue polypeptide: MLILISPAKTLDYQSPLVTTRYTRPELLDYSQQLIHEARKLSAPQIGKLMGISDKLADLNATRFHDWQPDFSPENARQAILAFKGDVYTGLQAETFSEADFDFAQQHLRMLSGLYGVLRPLDLMQPYRLEMGIRLENAKGKDLYQFWGDVITDKLNEALAAQGDKIVINLASDEYYKSVKPKQLNAEIIKPVFLDEKNGKFKVISFYAKKARGLMSRYIIENRLTKPEQLTAFNSEGYFYDEQASGKGELVFKRHEQN.

It belongs to the UPF0246 family.

In Citrobacter koseri (strain ATCC BAA-895 / CDC 4225-83 / SGSC4696), this protein is UPF0246 protein CKO_03380.